A 361-amino-acid polypeptide reads, in one-letter code: Probable lipid desaturase ADS3.2, chloroplastic (361 aa).

The transit peptide at 1 to 57 directs the protein to the chloroplast; that stretch reads MMSLSTTLKPLSHFSPFVKRHNPKTNNTLFTLDTHNFTNSFWSKRGGSVSHRKHTVV. The next 2 helical transmembrane spans lie at 99-118 and 122-139; these read LVIF…YFSW and WVFP…TLSY. The short motif at 140-145 is the Histidine box-1 element; sequence HRNLSH. The Histidine box-2 motif lies at 177 to 181; it reads HRYHH. The helical transmembrane segment at 246–266 threads the bilayer; sequence FLFYFCGGMPLLVWGIGITIA. The Histidine box-3 signature appears at 309–313; it reads HNNHH.

This sequence belongs to the fatty acid desaturase type 1 family. Fe(2+) is required as a cofactor.

The protein resides in the plastid. Its subcellular location is the chloroplast membrane. It participates in lipid metabolism; polyunsaturated fatty acid biosynthesis. The sequence is that of Probable lipid desaturase ADS3.2, chloroplastic from Arabidopsis thaliana (Mouse-ear cress).